Here is a 159-residue protein sequence, read N- to C-terminus: Cyclic pyranopterin monophosphate synthase (159 aa).

Residues 75–77 (LCH) and 113–114 (ME) contribute to the substrate site. The active site involves aspartate 128.

The protein belongs to the MoaC family. In terms of assembly, homohexamer; trimer of dimers.

It catalyses the reaction (8S)-3',8-cyclo-7,8-dihydroguanosine 5'-triphosphate = cyclic pyranopterin phosphate + diphosphate. Its pathway is cofactor biosynthesis; molybdopterin biosynthesis. Catalyzes the conversion of (8S)-3',8-cyclo-7,8-dihydroguanosine 5'-triphosphate to cyclic pyranopterin monophosphate (cPMP). This Cupriavidus metallidurans (strain ATCC 43123 / DSM 2839 / NBRC 102507 / CH34) (Ralstonia metallidurans) protein is Cyclic pyranopterin monophosphate synthase.